Here is a 288-residue protein sequence, read N- to C-terminus: uncharacterized protein (288 aa).

An ATP-grasp domain is found at lysine 107 to alanine 288. Residues lysine 145 and glutamine 178–alanine 188 contribute to the ATP site. Aspartate 248, glutamate 261, and asparagine 263 together coordinate Mg(2+). 3 residues coordinate Mn(2+): aspartate 248, glutamate 261, and asparagine 263.

The protein belongs to the RimK family.

This is an uncharacterized protein from Mycoplasma pneumoniae (strain ATCC 29342 / M129 / Subtype 1) (Mycoplasmoides pneumoniae).